The primary structure comprises 709 residues: Protein white (709 aa).

Residues M1–E35 form a disordered region. Residues K15–Q32 show a composition bias toward polar residues. In terms of domain architecture, ABC transporter spans F103–N348. ATP contacts are provided by residues G136–T143 and G292–T299. A helical membrane pass occupies residues L457–V475. N485 is a glycosylation site (N-linked (GlcNAc...) asparagine). The next 4 membrane-spanning stretches (helical) occupy residues S487–F507, L537–I555, Y564–I585, and V598–S616. N658 carries N-linked (GlcNAc...) asparagine glycosylation. Residues L681 to C700 traverse the membrane as a helical segment.

It belongs to the ABC transporter superfamily. ABCG family. Eye pigment precursor importer (TC 3.A.1.204) subfamily.

The protein localises to the membrane. Functionally, may be part of a membrane-spanning permease system necessary for the transport of pigment precursors into pigment cells responsible for eye color. The polypeptide is Protein white (W) (Anopheles albimanus (New world malaria mosquito)).